Here is a 528-residue protein sequence, read N- to C-terminus: MAGSDTAPFLSQADDPDDGPAPGHPGLPGPMGNPKSGELEVPDCEGLQRITGLSRGHSTLIVVVLCYINLLNYMDRFTVAGVLTDIEQFFNIGDGSTGLIQTVFISSYMVLAPVFGYLGDRYNRKYLMCGGIAFWSLVTLGSSFIPREHFWLLLLTRGLVGVGEASYSTIAPTLIADLFVADQRSRMLSIFYFAIPVGSGLGYIAGSKVKDVAGDWHWALRVTPGLGVLAVLLLFLVVQEPPRGAVERHSGSPPLSPTSWWADLKALARNPSFVLSSLGFTSVAFVTGSLALWAPAFLLRSRVVLGETPPCLPGDSCSSSDSLIFGLITCLTGVLGVGLGVEISRRLRRFNPRADPLVCAAGLLGSAPFLFLALACARGSIVATYIFIFIGETLLSMNWAIVADILLYVVIPTRRSTAEAFQIVLSHLLGDAGSPYLIGLISDRLRRSWPPSFLSEFRALQFSLMLCAFVGALGGAAFLGTAMFIEDDRRRAQLHVQGLLHESGPSDDRIVVPQRGRSTRVPVSSVLI.

Residues 1-38 (MAGSDTAPFLSQADDPDDGPAPGHPGLPGPMGNPKSGE) form a disordered region. Ala2 is modified (N-acetylalanine). 12 consecutive transmembrane segments (helical) span residues 60–80 (LIVV…FTVA), 98–118 (GLIQ…FGYL), 126–146 (YLMC…SFIP), 160–180 (VGVG…DLFV), 187–207 (MLSI…IAGS), 218–238 (WALR…FLVV), 278–298 (LGFT…PAFL), 323–343 (LIFG…GVEI), 357–377 (LVCA…LACA), 381–401 (IVAT…NWAI), 421–441 (FQIV…IGLI), and 465–485 (MLCA…AMFI). Ser518 is modified (phosphoserine).

It belongs to the major facilitator superfamily. Spinster (TC 2.A.1.49) family. Interacts with BCL2 and BCL2L1. As to expression, expressed in liver (at mRNA and protein levels).

It is found in the lysosome membrane. The enzyme catalyses a 1-acyl-sn-glycero-3-phosphocholine(out) + H(+)(out) = a 1-acyl-sn-glycero-3-phosphocholine(in) + H(+)(in). It carries out the reaction 1-hexadecanoyl-sn-glycero-3-phosphocholine(out) + H(+)(out) = 1-hexadecanoyl-sn-glycero-3-phosphocholine(in) + H(+)(in). It catalyses the reaction 1-(9Z-octadecenoyl)-sn-glycero-3-phosphocholine(out) + H(+)(out) = 1-(9Z-octadecenoyl)-sn-glycero-3-phosphocholine(in) + H(+)(in). The catalysed reaction is 1-(5Z,8Z,11Z,14Z-eicosatetraenoyl)-sn-glycero-3-phosphocholine(out) + H(+)(out) = 1-(5Z,8Z,11Z,14Z-eicosatetraenoyl)-sn-glycero-3-phosphocholine(in) + H(+)(in). The enzyme catalyses 1-(4Z,7Z,10Z,13Z,16Z,19Z-docosahexaenoyl)-sn-glycero-3-phosphocholine(out) + H(+)(out) = 1-(4Z,7Z,10Z,13Z,16Z,19Z-docosahexaenoyl)-sn-glycero-3-phosphocholine(in) + H(+)(in). It carries out the reaction a 1-acyl-sn-glycero-3-phosphoethanolamine(out) + H(+)(out) = a 1-acyl-sn-glycero-3-phosphoethanolamine(in) + H(+)(in). It catalyses the reaction 1-(9Z-octadecenoyl)-sn-glycero-3-phosphoethanolamine(out) + H(+)(out) = 1-(9Z-octadecenoyl)-sn-glycero-3-phosphoethanolamine(in) + H(+)(in). The catalysed reaction is 1-acyl-sn-glycero-3-phospho-(1'-sn-glycerol)(out) + H(+)(out) = 1-acyl-sn-glycero-3-phospho-(1'-sn-glycerol)(in) + H(+)(in). The enzyme catalyses 1-(9Z-octadecenoyl)-sn-glycero-3-phospho-(1'-sn-glycerol)(out) + H(+)(out) = 1-(9Z-octadecenoyl)-sn-glycero-3-phospho-(1'-sn-glycerol)(in) + H(+)(in). It carries out the reaction a 1-O-(1Z-alkenyl)-sn-glycero-3-phosphocholine(out) + H(+)(out) = a 1-O-(1Z-alkenyl)-sn-glycero-3-phosphocholine(in) + H(+)(in). It catalyses the reaction 1-(1Z-hexadecenyl)-sn-glycero-3-phosphocholine(out) + H(+)(out) = 1-(1Z-hexadecenyl)-sn-glycero-3-phosphocholine(in) + H(+)(in). The catalysed reaction is a 1-O-(1Z-alkenyl)-sn-glycero-3-phosphoethanolamine(out) + H(+)(out) = a 1-O-(1Z-alkenyl)-sn-glycero-3-phosphoethanolamine(in) + H(+)(in). The enzyme catalyses 1-O-(1Z-hexadecenyl)-sn-glycero-3-phosphoethanolamine(out) + H(+)(out) = 1-O-(1Z-hexadecenyl)-sn-glycero-3-phosphoethanolamine(in) + H(+)(in). Its function is as follows. Plays a critical role in the phospholipid salvage pathway from lysosomes to the cytosol. Mediates the rate-limiting, proton-dependent, lysosomal efflux of lysophospholipids, which can then be reacylated by acyltransferases in the endoplasmic reticulum to form phospholipids. Selective for zwitterionic headgroups such as lysophosphatidylcholine (LPC) and lysophosphatidylethanolamine (LPE), can also transport lysophosphatidylglycerol (LPG), but not other anionic lysophospholipids, sphingosine, nor sphingomyelin. Transports lysophospholipids with saturated, monounsaturated, and polyunsaturated fatty acids, such as 1-hexadecanoyl-sn-glycero-3-phosphocholine, 1-(9Z-octadecenoyl)-sn-glycero-3-phosphocholine and 1-(4Z,7Z,10Z,13Z,16Z,19Z-docosahexaenoyl)-sn-glycero-3-phosphocholine, respectively. Can also transport lysoplasmalogen (LPC with a fatty alcohol) such as 1-(1Z-hexadecenyl)-sn-glycero-3-phosphocholine. Essential player in lysosomal homeostasis. Crucial for cell survival under conditions of nutrient limitation. May be involved in necrotic or autophagic cell death. This Mus musculus (Mouse) protein is Protein spinster homolog 1 (Spns1).